The following is a 1243-amino-acid chain: Serine/threonine-protein kinase/endoribonuclease IRE1 (1243 aa).

Positions 1 to 35 (MMRRPPSQGRWSASHQKLLLAFAFILIPWLQLADA) are cleaved as a signal peptide. Residues 36-585 (QQQPQQPQIR…VKALPQSAAN (550 aa)) lie on the Lumenal side of the membrane. 2 disordered regions span residues 70 to 132 (HAAP…KPNY) and 149 to 172 (QPVR…GLAS). Residues 73–85 (PDVHPEAKFDTVN) are compositionally biased toward basic and acidic residues. Polar residues predominate over residues 90 to 99 (QQSTASPQQH). Residues 163–172 (SSSAASGLAS) show a composition bias toward low complexity. N-linked (GlcNAc...) asparagine glycans are attached at residues asparagine 226, asparagine 470, and asparagine 554. The helical transmembrane segment at 586-606 (SVIDFVSNPILIIFLIGSLIY) threads the bilayer. Residues 607–1243 (NEKKLRRSYH…FREYYEPAGL (637 aa)) are Cytoplasmic-facing. The tract at residues 638–765 (GDESGDDKDG…QSHENDPALT (128 aa)) is disordered. Positions 650–660 (PSSPSPRSQPQ) are enriched in low complexity. The span at 674-693 (ERNAGDQDKVKDNRSLHDVS) shows a compositional bias: basic and acidic residues. Residues 732 to 749 (KKKKAHRGRRGGVKHRKG) are compositionally biased toward basic residues. Residues 809-1105 (VDTDVELGMG…SREVMAHPFF (297 aa)) enclose the Protein kinase domain. Residues 815-823 (LGMGSNGTV) and lysine 837 contribute to the ATP site. ADP-binding residues include serine 819, lysine 837, glutamate 881, and cysteine 883. The active-site Proton acceptor is aspartate 931. Mg(2+) is bound by residues asparagine 936 and aspartate 953. A KEN domain is found at 1108-1240 (PKKRLAFLCD…TDRFREYYEP (133 aa)).

It belongs to the protein kinase superfamily. Ser/Thr protein kinase family. Mg(2+) serves as cofactor. In terms of processing, autophosphorylated mainly on serine residues; phosphorylation enables nucleotide binding by the active site.

Its subcellular location is the endoplasmic reticulum membrane. The enzyme catalyses L-seryl-[protein] + ATP = O-phospho-L-seryl-[protein] + ADP + H(+). The catalysed reaction is L-threonyl-[protein] + ATP = O-phospho-L-threonyl-[protein] + ADP + H(+). In terms of biological role, senses unfolded proteins in the lumen of the endoplasmic reticulum via its N-terminal domain which leads to enzyme auto-activation. The active endoribonuclease domain splices precursor mRNAs to produce their mature form which then induces transcription of UPR target genes. The polypeptide is Serine/threonine-protein kinase/endoribonuclease IRE1 (Hypocrea jecorina (strain QM6a) (Trichoderma reesei)).